Here is a 370-residue protein sequence, read N- to C-terminus: tRNA-specific 2-thiouridylase MnmA (370 aa).

Residues 7-14 and Met-34 contribute to the ATP site; that span reads ALSGGVDS. The segment at 104-106 is interaction with target base in tRNA; the sequence is NPD. Cys-109 functions as the Nucleophile in the catalytic mechanism. A disulfide bridge links Cys-109 with Cys-202. Residue Gly-134 coordinates ATP. The segment at 152–154 is interaction with tRNA; it reads KDQ. The active-site Cysteine persulfide intermediate is the Cys-202. The interaction with tRNA stretch occupies residues 308 to 309; sequence RY.

Belongs to the MnmA/TRMU family.

It localises to the cytoplasm. It catalyses the reaction S-sulfanyl-L-cysteinyl-[protein] + uridine(34) in tRNA + AH2 + ATP = 2-thiouridine(34) in tRNA + L-cysteinyl-[protein] + A + AMP + diphosphate + H(+). In terms of biological role, catalyzes the 2-thiolation of uridine at the wobble position (U34) of tRNA, leading to the formation of s(2)U34. In Mycoplasma mobile (strain ATCC 43663 / 163K / NCTC 11711) (Mesomycoplasma mobile), this protein is tRNA-specific 2-thiouridylase MnmA.